The primary structure comprises 309 residues: Olfactory receptor 5H17 (309 aa).

At 1-28 (MEKKNETLWTEFVLTGLTCLPQWKPLLF) the chain is on the extracellular side. Asn-5 is a glycosylation site (N-linked (GlcNAc...) asparagine). The helical transmembrane segment at 29–49 (LVFLVIYFMTIVGNLGLITLI) threads the bilayer. Residues 50–56 (WNDPHLH) are Cytoplasmic-facing. A helical membrane pass occupies residues 57 to 77 (IPMYLFLSNLAFVDTWLSSTV). Residues 78–93 (TPRMLFNLLDKGKVIS) lie on the Extracellular side of the membrane. The chain crosses the membrane as a helical span at residues 94 to 114 (VAECKTQFFSFAISVTTECFL). Residues Cys-97 and Cys-189 are joined by a disulfide bond. Over 115–144 (LAAMAYDRYAAICNPLLYPVIMTNRLCVRL) the chain is Cytoplasmic. A helical transmembrane segment spans residues 145–165 (LALSFIGGFLHAVIHESFLSR). Residues 166–198 (LTFCNSNIIYHFYCDVIPLLKISCTDPSLNYLI) lie on the Extracellular side of the membrane. A helical membrane pass occupies residues 199-219 (IFIFSGSIQVFTIMTVLISYT). At 220–239 (FVLFTILKKKSDKGIRKAFS) the chain is on the cytoplasmic side. A helical transmembrane segment spans residues 240-260 (TCGAHLLSVSLYYGPLLFMYV). Topologically, residues 261–271 (HPASSEVDDQD) are extracellular. The helical transmembrane segment at 272–292 (MILSLFYTVIIPVLNPIIYSL) threads the bilayer. The Cytoplasmic segment spans residues 293 to 309 (RNKQVIDSLKKMLKMMV).

Belongs to the G-protein coupled receptor 1 family.

Its subcellular location is the cell membrane. Potential odorant receptor. The sequence is that of Olfactory receptor 5H17 from Mus musculus (Mouse).